Here is a 204-residue protein sequence, read N- to C-terminus: Large ribosomal subunit protein bL9 (204 aa).

The interval 180-204 is disordered; it reads DDIGGAASDDEGDAPAAAADEEESK. The segment covering 187-204 has biased composition (acidic residues); that stretch reads SDDEGDAPAAAADEEESK.

This sequence belongs to the bacterial ribosomal protein bL9 family.

Its function is as follows. Binds to the 23S rRNA. The sequence is that of Large ribosomal subunit protein bL9 from Ruegeria sp. (strain TM1040) (Silicibacter sp.).